The primary structure comprises 113 residues: Protein Rev (113 aa).

The segment at 15-23 is homomultimerization; sequence LIKFLYQSN. The segment at 17–45 is disordered; sequence KFLYQSNPPPSPEGTRQARRNRRRRWRQR. The Nuclear localization signal and RNA-binding (RRE) motif lies at 31 to 47; that stretch reads TRQARRNRRRRWRQRQR. Residues 33-45 show a composition bias toward basic residues; it reads QARRNRRRRWRQR. A Nuclear export signal and binding to XPO1 motif is present at residues 70–81; the sequence is LQLPPLERLTLD. Residues Ser89 and Ser96 each carry the phosphoserine; by host modification. The segment at 89–113 is disordered; that stretch reads SGTQGVGSPQILVESPTILESGTKE.

The protein belongs to the HIV-1 REV protein family. Homomultimer; when bound to the RRE. Multimeric assembly is essential for activity and may involve XPO1. Binds to human KPNB1, XPO1, TNPO1, RANBP5 and IPO7. Interacts with the viral Integrase. Interacts with human KHDRBS1. Interacts with human NAP1; this interaction decreases Rev multimerization and stimulates its activity. Interacts with human DEAD-box helicases DDX3 and DDX24; these interactions may serve for viral RNA export to the cytoplasm and packaging, respectively. Interacts with human PSIP1; this interaction may inhibit HIV-1 DNA integration by promoting dissociation of the Integrase-LEDGF/p75 complex. In terms of processing, asymmetrically arginine dimethylated at one site by host PRMT6. Methylation impairs the RNA-binding activity and export of viral RNA from the nucleus to the cytoplasm. Phosphorylated by protein kinase CK2. Presence of, and maybe binding to the N-terminus of the regulatory beta subunit of CK2 is necessary for CK2-mediated Rev's phosphorylation.

Its subcellular location is the host nucleus. It localises to the host nucleolus. The protein localises to the host cytoplasm. Its function is as follows. Escorts unspliced or incompletely spliced viral pre-mRNAs (late transcripts) out of the nucleus of infected cells. These pre-mRNAs carry a recognition sequence called Rev responsive element (RRE) located in the env gene, that is not present in fully spliced viral mRNAs (early transcripts). This function is essential since most viral proteins are translated from unspliced or partially spliced pre-mRNAs which cannot exit the nucleus by the pathway used by fully processed cellular mRNAs. Rev itself is translated from a fully spliced mRNA that readily exits the nucleus. Rev's nuclear localization signal (NLS) binds directly to KPNB1/Importin beta-1 without previous binding to KPNA1/Importin alpha-1. KPNB1 binds to the GDP bound form of RAN (Ran-GDP) and targets Rev to the nucleus. In the nucleus, the conversion from Ran-GDP to Ran-GTP dissociates Rev from KPNB1 and allows Rev's binding to the RRE in viral pre-mRNAs. Rev multimerization on the RRE via cooperative assembly exposes its nuclear export signal (NES) to the surface. Rev can then form a complex with XPO1/CRM1 and Ran-GTP, leading to nuclear export of the complex. Conversion from Ran-GTP to Ran-GDP mediates dissociation of the Rev/RRE/XPO1/RAN complex, so that Rev can return to the nucleus for a subsequent round of export. Beside KPNB1, also seems to interact with TNPO1/Transportin-1, RANBP5/IPO5 and IPO7/RANBP7 for nuclear import. The nucleoporin-like HRB/RIP is an essential cofactor that probably indirectly interacts with Rev to release HIV RNAs from the perinuclear region to the cytoplasm. The chain is Protein Rev from Human immunodeficiency virus type 1 group M subtype B (isolate JH32) (HIV-1).